The primary structure comprises 99 residues: Putative pterin-4-alpha-carbinolamine dehydratase (99 aa).

It belongs to the pterin-4-alpha-carbinolamine dehydratase family.

The catalysed reaction is (4aS,6R)-4a-hydroxy-L-erythro-5,6,7,8-tetrahydrobiopterin = (6R)-L-erythro-6,7-dihydrobiopterin + H2O. This is Putative pterin-4-alpha-carbinolamine dehydratase from Synechococcus sp. (strain CC9311).